Consider the following 364-residue polypeptide: Bifunctional protein Rv2228c (364 aa).

Residues Met-1–Ala-139 form the RNase H type-1 domain. Positions 8, 49, 73, and 123 each coordinate Mg(2+). His-172 functions as the Tele-phosphohistidine intermediate in the catalytic mechanism. Glu-246 (proton donor/acceptor; for phosphatase activity) is an active-site residue.

This sequence in the N-terminal section; belongs to the RNase H family. The protein in the C-terminal section; belongs to the histidine phosphatase superfamily. The N-terminal domain alone is monomeric in solution but associates in the crystal to form a dimer. It depends on Mg(2+) as a cofactor.

The enzyme catalyses Endonucleolytic cleavage to 5'-phosphomonoester.. It carries out the reaction adenosylcob(III)alamin 5'-phosphate + H2O = adenosylcob(III)alamin + phosphate. The catalysed reaction is alpha-ribazole 5'-phosphate + H2O = alpha-ribazole + phosphate. Its pathway is nucleoside biosynthesis; alpha-ribazole biosynthesis; alpha-ribazole from 5,6-dimethylbenzimidazole: step 2/2. Its function is as follows. Endonuclease that displays both RNase H activity with a hybrid RNA/DNA substrate as well as double-stranded RNase activity. As the only authenticated RNase HI in M.tuberculosis, probably plays an important role in the physiology of this organism, being likely involved in bacterial replication. Functionally, catalyzes the hydrolysis of the phospho group from alpha-ribazole 5'-phosphate to form alpha-ribazole. May also catalyze the conversion of adenosylcobalamin 5'-phosphate to adenosylcobalamin (vitamin B12). Has a possible role in B12 recycling, but the primary role of the C-terminal domain of this phosphatase enzyme could be phosphate generation to help bacterial survival within the macrophage, which is a phosphate-deprived environment. This chain is Bifunctional protein Rv2228c, found in Mycobacterium tuberculosis (strain ATCC 25618 / H37Rv).